Consider the following 284-residue polypeptide: D-tagatose-1,6-bisphosphate aldolase subunit GatY (284 aa).

Asp-82 acts as the Proton donor in catalysis. Residues His-83 and His-180 each contribute to the Zn(2+) site. Gly-181 lines the dihydroxyacetone phosphate pocket. His-208 is a binding site for Zn(2+). Dihydroxyacetone phosphate is bound by residues 209–211 (GAS) and 230–233 (NVAT).

It belongs to the class II fructose-bisphosphate aldolase family. TagBP aldolase GatY subfamily. Forms a complex with GatZ. Zn(2+) serves as cofactor.

The catalysed reaction is D-tagatofuranose 1,6-bisphosphate = D-glyceraldehyde 3-phosphate + dihydroxyacetone phosphate. It participates in carbohydrate metabolism; D-tagatose 6-phosphate degradation; D-glyceraldehyde 3-phosphate and glycerone phosphate from D-tagatose 6-phosphate: step 2/2. Functionally, catalytic subunit of the tagatose-1,6-bisphosphate aldolase GatYZ, which catalyzes the reversible aldol condensation of dihydroxyacetone phosphate (DHAP or glycerone-phosphate) with glyceraldehyde 3-phosphate (G3P) to produce tagatose 1,6-bisphosphate (TBP). Requires GatZ subunit for full activity and stability. Is involved in the catabolism of galactitol. The polypeptide is D-tagatose-1,6-bisphosphate aldolase subunit GatY (Salmonella choleraesuis (strain SC-B67)).